We begin with the raw amino-acid sequence, 624 residues long: Phosphoenolpyruvate carboxykinase [GTP] (624 aa).

Substrate is bound by residues Arg88 and 222-224; that span reads YGG. Mn(2+)-binding residues include Lys231 and His250. Ser272 is a substrate binding site. Residue 273–278 coordinates GTP; it reads MCGKTS. Cys274 is an active-site residue. Asp291 lines the Mn(2+) pocket. 386–388 lines the substrate pocket; sequence NAR. Residues Arg388 and Arg420 each coordinate GTP.

The protein belongs to the phosphoenolpyruvate carboxykinase [GTP] family. Mn(2+) serves as cofactor.

It is found in the cytoplasm. It catalyses the reaction oxaloacetate + GTP = phosphoenolpyruvate + GDP + CO2. The protein operates within carbohydrate biosynthesis; gluconeogenesis. Functionally, catalyzes the conversion of oxaloacetate (OAA) to phosphoenolpyruvate (PEP), the rate-limiting step in the metabolic pathway that produces glucose from lactate and other precursors derived from the citric acid cycle. The sequence is that of Phosphoenolpyruvate carboxykinase [GTP] from Pyrococcus furiosus (strain ATCC 43587 / DSM 3638 / JCM 8422 / Vc1).